A 128-amino-acid chain; its full sequence is Large ribosomal subunit protein bL12 (128 aa).

The protein belongs to the bacterial ribosomal protein bL12 family. Homodimer. Part of the ribosomal stalk of the 50S ribosomal subunit. Forms a multimeric L10(L12)X complex, where L10 forms an elongated spine to which 2 to 4 L12 dimers bind in a sequential fashion. Binds GTP-bound translation factors.

Its function is as follows. Forms part of the ribosomal stalk which helps the ribosome interact with GTP-bound translation factors. Is thus essential for accurate translation. This Brachyspira hyodysenteriae (strain ATCC 49526 / WA1) protein is Large ribosomal subunit protein bL12.